The sequence spans 1214 residues: Spliceosome-associated protein 130 A (1214 aa).

The segment at 817 to 848 (AGGVGENGNGNADQMENGADDEDKEDPLSDEQ) is disordered. Acidic residues predominate over residues 834-845 (GADDEDKEDPLS).

The protein belongs to the RSE1 family. As to quaternary structure, identified in the spliceosome C complex. Component of the U11/U12 snRNPs that are part of the U12-type spliceosome. Component of splicing factor SF3B complex. Expressed at low levels in roots, leaves, inflorescence and, to a lower extent, in siliques.

Its subcellular location is the nucleus. Functionally, subunit of the splicing factor SF3B required for 'A' complex assembly formed by the stable binding of U2 snRNP to the branchpoint sequence (BPS) in pre-mRNA. Sequence independent binding of SF3A/SF3B complex upstream of the branch site is essential, it may anchor U2 snRNP to the pre-mRNA. May also be involved in the assembly of the 'E' complex. Also belongs to the minor U12-dependent spliceosome, which is involved in the splicing of rare class of nuclear pre-mRNA intron. Required for pollen and ovule development, especially during the transition from microspore to the bicellular stage in pollen development. Involved in the accumulation of QRT1 and QRT3. The chain is Spliceosome-associated protein 130 A from Arabidopsis thaliana (Mouse-ear cress).